The primary structure comprises 197 residues: Adenylate kinase (197 aa).

Residue 19–24 (GSGKGT) coordinates ATP. Residues 39 to 68 (SSGDLLRAEVQSGSPKGKELKAMMERGELV) are NMP. AMP is bound by residues Ser-40, Arg-45, 66–68 (ELV), 95–98 (RYPR), and Gln-102. An LID region spans residues 132–142 (KRAETSNRVDD). Arg-133 contributes to the ATP binding site. AMP-binding residues include Arg-139 and Arg-150. Gly-178 is a binding site for ATP.

This sequence belongs to the adenylate kinase family. As to quaternary structure, monomer.

It localises to the cytoplasm. It catalyses the reaction AMP + ATP = 2 ADP. Catalyzes the reversible transfer of the terminal phosphate group between ATP and AMP. Plays an important role in cellular energy homeostasis and in adenine nucleotide metabolism. The polypeptide is Adenylate kinase (Schistosoma mansoni (Blood fluke)).